Consider the following 288-residue polypeptide: Shikimate dehydrogenase (NADP(+)) (288 aa).

Shikimate is bound by residues 21–23 (SLS) and Thr-68. Lys-72 functions as the Proton acceptor in the catalytic mechanism. Glu-84 is a binding site for NADP(+). Shikimate contacts are provided by Asn-93 and Asp-108. NADP(+) is bound by residues 132–136 (GNGGA) and Leu-230. Tyr-232 serves as a coordination point for shikimate. Gly-253 is a binding site for NADP(+).

This sequence belongs to the shikimate dehydrogenase family. In terms of assembly, homodimer.

The enzyme catalyses shikimate + NADP(+) = 3-dehydroshikimate + NADPH + H(+). The protein operates within metabolic intermediate biosynthesis; chorismate biosynthesis; chorismate from D-erythrose 4-phosphate and phosphoenolpyruvate: step 4/7. Its function is as follows. Involved in the biosynthesis of the chorismate, which leads to the biosynthesis of aromatic amino acids. Catalyzes the reversible NADPH linked reduction of 3-dehydroshikimate (DHSA) to yield shikimate (SA). The chain is Shikimate dehydrogenase (NADP(+)) from Gloeothece citriformis (strain PCC 7424) (Cyanothece sp. (strain PCC 7424)).